The primary structure comprises 297 residues: MENYQKVEKIGEGTYGVVYKARHKLSGRIVAMKKIRLEDESEGVPSTAIREISLLKEVNDENNRSNCVRLLDILHAESKLYLVFEFLDMDLKKYMDRISETGATSLDPRLVQKFTYQLVNGVNFCHSRRIIHRDLKPQNLLIDKEGNLKLADFGLARSFGVPLRNYTHEIVTLWYRAPEVLLGSRHYSTGVDIWSVGCIFAEMIRRSPLFPGDSEIDEIFKIFQVLGTPNEEVWPGVTLLQDYKSTFPRWKRMDLHKVVPNGEEDAIELLSAMLVYDPAHRISAKRALQQNYLRDFH.

One can recognise a Protein kinase domain in the interval 4-293 (YQKVEKIGEG…AKRALQQNYL (290 aa)). ATP-binding positions include 10–18 (IGEGTYGVV) and lysine 33. Position 14 is a phosphothreonine (threonine 14). The residue at position 15 (tyrosine 15) is a Phosphotyrosine. Residue aspartate 134 is the Proton acceptor of the active site. The residue at position 167 (threonine 167) is a Phosphothreonine.

The protein belongs to the protein kinase superfamily. CMGC Ser/Thr protein kinase family. CDC2/CDKX subfamily. Forms a stable but non-covalent complex with regulatory subunit suc1 and with a cyclin. Interacts with cyclin cdc13. Interacts with cyclin cig2. Interacts with cdc37.

Its subcellular location is the cytoplasm. The enzyme catalyses L-seryl-[protein] + ATP = O-phospho-L-seryl-[protein] + ADP + H(+). The catalysed reaction is L-threonyl-[protein] + ATP = O-phospho-L-threonyl-[protein] + ADP + H(+). With respect to regulation, phosphorylation at Thr-14 or Tyr-15 inactivates the enzyme, while phosphorylation at Thr-167 activates it. Functionally, cyclin-dependent kinase that acts as a master regulator of the mitotic and meiotic cell cycles. Required to drive the G1-S and G2-M transitions, and initiation of premeiotic DNA replication and meiosis II. More than 200 substrates have been identified. Substrate specificity is in part regulated by the bound cyclin protein. When complexed with cyclin cig2, it drives the G1-S phase transition. When complexed with cyclin cdc13, it drives the G2-M transition and initiation of meiosis II. Its activity rises throughout the cell cycle and substrate specificity is further influenced by activity thresholds with more sensitive substrates phosphorylated earlier in the cell cycle than less sensitive substrates. Phosphorylates dis1 during metaphase to ensure proper microtubule dynamics and accurate chromosome segregation. Phosphorylates the repetitive C-terminus of the large subunit of RNA polymerase II rpb1. Inactivated by checkpoint signaling following detection of cellular damage, leading to cell cycle arrest to allow damage repair. Inactivated during G2 DNA damage checkpoint signaling. Inactivated in response to defective RNA splicing. The protein is Cyclin-dependent kinase 1 of Schizosaccharomyces pombe (strain 972 / ATCC 24843) (Fission yeast).